Reading from the N-terminus, the 202-residue chain is Secreted RxLR effector protein 11 (202 aa).

The signal sequence occupies residues 1–23 (MRLNFTKLFAGAVALAWTTESMA). The RxLR-dEER motif lies at 49–61 (RRLRTINGADEER).

The protein belongs to the RxLR effector family.

Its subcellular location is the secreted. It localises to the host cytoplasm. It is found in the host nucleus. Effector that acts as a broad suppressor of cell death to interrupt plant immunity. Inhibits cell death induced by cell death-inducing proteins, including the PAMP elicitor INF1 from P.infestans. The protein is Secreted RxLR effector protein 11 of Plasmopara viticola (Downy mildew of grapevine).